We begin with the raw amino-acid sequence, 100 residues long: uncharacterized protein (100 aa).

The helical transmembrane segment at 13–32 (IWSSLNIICLMVTFLNVQLS) threads the bilayer.

Its subcellular location is the mitochondrion membrane. This is an uncharacterized protein from Schizosaccharomyces pombe (strain 972 / ATCC 24843) (Fission yeast).